Reading from the N-terminus, the 154-residue chain is IQ domain-containing protein F3 (154 aa).

Residues 89–118 (QEQATVKLQSCIRMWQCRQCYRQMCNALCL) enclose the IQ domain.

The sequence is that of IQ domain-containing protein F3 (IQCF3) from Homo sapiens (Human).